Reading from the N-terminus, the 462-residue chain is NAD(P) transhydrogenase subunit beta (462 aa).

The Periplasmic portion of the chain corresponds to 1–3; that stretch reads MSG. The helical transmembrane segment at 4-24 threads the bilayer; the sequence is GLVTAAYIVAAILFIFSLAGL. Residues 25–45 are Cytoplasmic-facing; it reads SKHETSRQGNNFGIAGMAIAL. Residues 46–66 traverse the membrane as a helical segment; the sequence is IATIFGPDTGNVGWILLAMVI. Residues 67–82 lie on the Periplasmic side of the membrane; it reads GGAIGIRLAKKVEMTE. Residues 83 to 103 traverse the membrane as a helical segment; that stretch reads MPELVAILHSFVGLAAVLVGF. Residues 104–115 are Cytoplasmic-facing; the sequence is NSYLHHDAGMAP. Residues 116–136 traverse the membrane as a helical segment; it reads ILVNIHLTEVFLGIFIGAVTF. Over 137-164 the chain is Periplasmic; the sequence is TGSVVAFGKLCGKISSKPLMLPNRHKMN. The helical transmembrane segment at 165 to 185 threads the bilayer; the sequence is LAALVVSFLLLIVFVRTDSVG. At 186-188 the chain is on the cytoplasmic side; sequence LQV. A helical transmembrane segment spans residues 189–209; that stretch reads LALLIMTAIALVFGWHLVASI. Residues 210–215 lie on the Periplasmic side of the membrane; the sequence is GGADMP. A helical membrane pass occupies residues 216–236; it reads VVVSMLNSYSGWAAAAAGFML. Residues 237–239 lie on the Cytoplasmic side of the membrane; sequence SND. A helical transmembrane segment spans residues 240–260; it reads LLIVTGALVGSSGAILSYIMC. Over 261–308 the chain is Periplasmic; the sequence is KAMNRSFISVIAGGFGTDGSSTGDDQEVGEHREITAEETAELLKNSHS. The chain crosses the membrane as a helical span at residues 309-329; it reads VIITPGYGMAVAQAQYPVAEI. At 330-462 the chain is on the cytoplasmic side; that stretch reads TEKLRARGIN…ASVDAILKAL (133 aa).

The protein belongs to the PNT beta subunit family. As to quaternary structure, heterodimer of an alpha and a beta chain.

It is found in the cell inner membrane. The enzyme catalyses NAD(+) + NADPH + H(+)(in) = NADH + NADP(+) + H(+)(out). Functionally, the transhydrogenation between NADH and NADP is coupled to respiration and ATP hydrolysis and functions as a proton pump across the membrane. In Escherichia coli O157:H7, this protein is NAD(P) transhydrogenase subunit beta (pntB).